The following is a 388-amino-acid chain: Glutamine transporter 2 (388 aa).

11 consecutive transmembrane segments (helical) span residues 5–27 (LFGS…IPMV), 31–53 (FGLF…AALL), 86–106 (LFYL…ADLI), 121–141 (FAQV…TQII), 147–167 (LLFF…IPGM), 186–206 (TSTI…LVAY), 218–238 (MVIL…YAVV), 268–288 (IILS…VAMA), 302–322 (IVTY…AADQ), 326–346 (VLGY…LAMV), and 368–388 (GGKL…ISQI).

The protein belongs to the amino acid/polyamine transporter 2 family.

The protein resides in the cell inner membrane. Its function is as follows. Seems to be involved in glutamine transport. Complements an E.coli glnP deletion mutant. The polypeptide is Glutamine transporter 2 (Aliivibrio fischeri (strain ATCC 700601 / ES114) (Vibrio fischeri)).